The primary structure comprises 174 residues: Austinoid biosynthesis clusters protein H (174 aa).

Belongs to the trt14 isomerase family. In terms of assembly, homodimer.

The protein operates within secondary metabolite biosynthesis; terpenoid biosynthesis. Its function is as follows. Part of the gene cluster B that mediates the biosynthesis of austinol and dehydroaustinol, two fungal meroterpenoids. The first step of the pathway is the synthesis of 3,5-dimethylorsellinic acid by the polyketide synthase ausA. 3,5-dimethylorsellinic acid is then prenylated by the polyprenyl transferase ausN. Further epoxidation by the FAD-dependent monooxygenase ausM and cyclization by the probable terpene cyclase ausL lead to the formation of protoaustinoid A. Protoaustinoid A is then oxidized to spiro-lactone preaustinoid A3 by the combined action of the FAD-binding monooxygenases ausB and ausC, and the dioxygenase ausE. Acid-catalyzed keto-rearrangement and ring contraction of the tetraketide portion of preaustinoid A3 by ausJ lead to the formation of preaustinoid A4. The aldo-keto reductase ausK, with the help of ausH, is involved in the next step by transforming preaustinoid A4 into isoaustinone which is in turn hydroxylated by the P450 monooxygenase ausI to form austinolide. Finally, the cytochrome P450 monooxygenase ausG modifies austinolide to austinol. Austinol can be further modified to dehydroaustinol which forms a diffusible complex with diorcinol that initiates conidiation. Due to genetic rearrangements of the clusters and the subsequent loss of some enzymes, the end products of the Emericella nidulans austinoid biosynthesis clusters are austinol and dehydroaustinol, even if additional enzymes, such as the O-acetyltransferase ausQ and the cytochrome P450 monooxygenase ausR are still functional. The polypeptide is Austinoid biosynthesis clusters protein H (Emericella nidulans (strain FGSC A4 / ATCC 38163 / CBS 112.46 / NRRL 194 / M139) (Aspergillus nidulans)).